We begin with the raw amino-acid sequence, 341 residues long: Processive diacylglycerol beta-glycosyltransferase (341 aa).

It belongs to the glycosyltransferase 2 family. Requires Mg(2+) as cofactor.

Its subcellular location is the cell membrane. It carries out the reaction a 1,2-diacyl-sn-glycerol + UDP-alpha-D-glucose = a 1,2-diacyl-3-O-(beta-D-glucopyranosyl)-sn-glycerol + UDP + H(+). It catalyses the reaction a 1,2-diacyl-sn-glycerol + UDP-alpha-D-galactose = a 1,2-diacyl-3-O-(beta-D-galactosyl)-sn-glycerol + UDP + H(+). The catalysed reaction is a 1,2-diacyl-3-O-(beta-D-glucopyranosyl)-sn-glycerol + UDP-alpha-D-glucose = a 1,2-diacyl-3-O-(beta-D-Glc-(1-&gt;6)-beta-D-Glc)-sn-glycerol + UDP + H(+). The enzyme catalyses a 1,2-diacyl-3-O-(beta-D-galactosyl)-sn-glycerol + UDP-alpha-D-galactose = a 1,2-diacyl-3-O-[beta-D-galactosyl-(1-&gt;6)-beta-D-galactosyl]-sn-glycerol + UDP + H(+). It participates in glycolipid metabolism; diglucosyl-diacylglycerol biosynthesis. Activated by the negatively charged lipid dioleoylphosphatidylglycerol (DOPG) and inhibited by N-(n-nonyl)deoxygalactonojirimycin (C9J). Functionally, processive glycosyltransferase involved in the biosynthesis of both the non-bilayer-prone beta-monoglycosyldiacylglycerol and the bilayer-forming membrane lipid beta-diglycosyldiacylglycerol. These components contribute to regulate the properties and stability of the membrane. Catalyzes sequentially the transfers of glucosyl or galactosyl residues from UDP-Glc or UDP-Gal to diacylglycerol (DAG) acceptor to form the corresponding beta-glycosyl-DAG (3-O-(beta-D-glycopyranosyl)-1,2-diacyl-sn-glycerol), which then acts as acceptor to give beta-diglycosyl-DAG product (3-O-(beta-D-glycopyranosyl-beta-(1-&gt;6)-D-glycopyranosyl)-1,2-diacyl-sn-glycerol). Dioleoylglycerol (DOG) is a preferred sugar acceptor than 3-O-(beta-D-glucopyranosyl)-1,2-dioleoyl-sn-glycerol. This Mycoplasma genitalium (strain ATCC 33530 / DSM 19775 / NCTC 10195 / G37) (Mycoplasmoides genitalium) protein is Processive diacylglycerol beta-glycosyltransferase.